Reading from the N-terminus, the 157-residue chain is Small ribosomal subunit protein uS7 (157 aa).

The protein belongs to the universal ribosomal protein uS7 family. In terms of assembly, part of the 30S ribosomal subunit. Contacts proteins S9 and S11.

One of the primary rRNA binding proteins, it binds directly to 16S rRNA where it nucleates assembly of the head domain of the 30S subunit. Is located at the subunit interface close to the decoding center, probably blocks exit of the E-site tRNA. This chain is Small ribosomal subunit protein uS7, found in Delftia acidovorans (strain DSM 14801 / SPH-1).